We begin with the raw amino-acid sequence, 154 residues long: MLYYMIALLIIAADQLTKWLVVKNMELGQSIPIIDQVFYITSHRNTGAAWGILAGQMWFFYLITTAVIIGIVYYIQRYTKGQRLLGVALGLMLGGAIGNFIDRAVRQEVVDFIHVIIVNYNYPIFNIADSSLCVGVMLLFIQMLLDSGKKKKEQ.

2 helical membrane passes run 52-72 (ILAG…IGIV) and 85-105 (LGVA…DRAV). Residues D111 and D129 contribute to the active site. Residues 124–144 (IFNIADSSLCVGVMLLFIQML) form a helical membrane-spanning segment.

Belongs to the peptidase A8 family.

Its subcellular location is the cell membrane. The catalysed reaction is Release of signal peptides from bacterial membrane prolipoproteins. Hydrolyzes -Xaa-Yaa-Zaa-|-(S,diacylglyceryl)Cys-, in which Xaa is hydrophobic (preferably Leu), and Yaa (Ala or Ser) and Zaa (Gly or Ala) have small, neutral side chains.. It participates in protein modification; lipoprotein biosynthesis (signal peptide cleavage). Its function is as follows. This protein specifically catalyzes the removal of signal peptides from prolipoproteins. The sequence is that of Lipoprotein signal peptidase from Bacillus subtilis (strain 168).